The primary structure comprises 448 residues: MSQSTATYINVIGAGLAGSEAAYQIAKRGIPVKLYEMRGVKATPQHKTTNFAELVCSNSFRGDSLTNAVGLLKEEMRRLDSIIMRNGEANRVPAGGAMAVDREGYAESVTAELENHPLIDVIRDEITEIPDDAITVIATGPLTSDALAEKIHAVNGGDGFYFYDAAAPIIDKSTIDMSKVYLKSRYDKGEAAYLNCPMTKEEFMAFHEALTTAEEAPLNSFEKEKYFEGCMPIEVMAKRGIKTMLYGPMKPVGLEYPDDYTGPRDGEFKTPYAVVQLRQDNAAGSLYNIVGFQTHLKWGEQKRVFQMIPGLENAEFVRYGVMHRNSYMDSPNLLTETFQSRNNPNLFFAGQMTGVEGYVESAASGLVAGINAARLFKREEALVFPQTTAIGSLPHYVTHADSKHFQPMNVNFGIIKELEGPRIRDKKERYEAIASRALADLDTCLASL.

Position 13–18 (13–18 (GAGLAG)) interacts with FAD.

It belongs to the MnmG family. TrmFO subfamily. FAD serves as cofactor.

It is found in the cytoplasm. It carries out the reaction uridine(54) in tRNA + (6R)-5,10-methylene-5,6,7,8-tetrahydrofolate + NADH + H(+) = 5-methyluridine(54) in tRNA + (6S)-5,6,7,8-tetrahydrofolate + NAD(+). The enzyme catalyses uridine(54) in tRNA + (6R)-5,10-methylene-5,6,7,8-tetrahydrofolate + NADPH + H(+) = 5-methyluridine(54) in tRNA + (6S)-5,6,7,8-tetrahydrofolate + NADP(+). Functionally, catalyzes the folate-dependent formation of 5-methyl-uridine at position 54 (M-5-U54) in all tRNAs. This is Methylenetetrahydrofolate--tRNA-(uracil-5-)-methyltransferase TrmFO from Streptococcus pyogenes serotype M12 (strain MGAS2096).